Here is a 434-residue protein sequence, read N- to C-terminus: MAMKFDVVIIGGGLAGLTCGIMLQQKGKCCAIINNGQSAMNFSSGSMDLLSQLPNGEKINSFEQGYDSLEEQLPNHPYCLFGKQHVLQKAKQFEQLIEKINLNVTGSYKQNHFRVTPLGGLHRTWLSADCIPTMDLHDEHFGYQKITVLGIEGYHDFQPHLLAENLIQHPQFTHCSITTALLHLPELDQLRLTSREFRSVNISQLLEHRLAFRELVQEIKQASGDGEAIFLPACFGLDNQDFFNKLTLETGLNLYELPTLPPSLVGLRQHKKLKTYFEKLGGFILNGDKALRAVIEDQQVKQIYTQLHQEHGIFAEHFVLASGSFFSNGLVSVFDRLLEPIFDVDMIGNSMIDIQNRLTWTARRFSSPQPYQSAGVAINSRCQLKKSGQIIKNLYAAGNVIGGYNALELGCGSGVAVVTALTAADNIIEAQNRV.

This sequence belongs to the anaerobic G-3-P dehydrogenase subunit B family. Composed of a catalytic GlpA/B dimer and of membrane bound GlpC. It depends on FMN as a cofactor.

It carries out the reaction a quinone + sn-glycerol 3-phosphate = dihydroxyacetone phosphate + a quinol. It functions in the pathway polyol metabolism; glycerol degradation via glycerol kinase pathway; glycerone phosphate from sn-glycerol 3-phosphate (anaerobic route): step 1/1. In terms of biological role, conversion of glycerol 3-phosphate to dihydroxyacetone. Uses fumarate or nitrate as electron acceptor. The chain is Anaerobic glycerol-3-phosphate dehydrogenase subunit B from Histophilus somni (strain 2336) (Haemophilus somnus).